The chain runs to 123 residues: Large ribosomal subunit protein bL12 (123 aa).

The protein belongs to the bacterial ribosomal protein bL12 family. Homodimer. Part of the ribosomal stalk of the 50S ribosomal subunit. Forms a multimeric L10(L12)X complex, where L10 forms an elongated spine to which 2 to 4 L12 dimers bind in a sequential fashion. Binds GTP-bound translation factors.

In terms of biological role, forms part of the ribosomal stalk which helps the ribosome interact with GTP-bound translation factors. Is thus essential for accurate translation. The chain is Large ribosomal subunit protein bL12 from Wigglesworthia glossinidia brevipalpis.